A 506-amino-acid chain; its full sequence is ATP synthase subunit alpha (506 aa).

Gly171–Thr178 is a binding site for ATP.

The protein belongs to the ATPase alpha/beta chains family. In terms of assembly, F-type ATPases have 2 components, CF(1) - the catalytic core - and CF(0) - the membrane proton channel. CF(1) has five subunits: alpha(3), beta(3), gamma(1), delta(1), epsilon(1). CF(0) has four main subunits: a(1), b(1), b'(1) and c(9-12).

It is found in the cellular thylakoid membrane. It catalyses the reaction ATP + H2O + 4 H(+)(in) = ADP + phosphate + 5 H(+)(out). Produces ATP from ADP in the presence of a proton gradient across the membrane. The alpha chain is a regulatory subunit. The chain is ATP synthase subunit alpha from Trichormus variabilis (strain ATCC 29413 / PCC 7937) (Anabaena variabilis).